Consider the following 134-residue polypeptide: Small ribosomal subunit protein uS8 (134 aa).

Belongs to the universal ribosomal protein uS8 family. As to quaternary structure, part of the 30S ribosomal subunit. Contacts proteins S5 and S12.

Its function is as follows. One of the primary rRNA binding proteins, it binds directly to 16S rRNA central domain where it helps coordinate assembly of the platform of the 30S subunit. This is Small ribosomal subunit protein uS8 from Pseudothermotoga lettingae (strain ATCC BAA-301 / DSM 14385 / NBRC 107922 / TMO) (Thermotoga lettingae).